Reading from the N-terminus, the 96-residue chain is Co-chaperonin GroES (96 aa).

This sequence belongs to the GroES chaperonin family. In terms of assembly, heptamer of 7 subunits arranged in a ring. Interacts with the chaperonin GroEL.

The protein resides in the cytoplasm. In terms of biological role, together with the chaperonin GroEL, plays an essential role in assisting protein folding. The GroEL-GroES system forms a nano-cage that allows encapsulation of the non-native substrate proteins and provides a physical environment optimized to promote and accelerate protein folding. GroES binds to the apical surface of the GroEL ring, thereby capping the opening of the GroEL channel. This Methylibium petroleiphilum (strain ATCC BAA-1232 / LMG 22953 / PM1) protein is Co-chaperonin GroES.